Here is a 1486-residue protein sequence, read N- to C-terminus: Chromosome partition protein MukB (1486 aa).

34–41 (GGNGAGKS) is an ATP binding site. Coiled coils occupy residues 326–418 (LEAD…QYNQ), 444–480 (LETF…QAYQ), and 509–603 (RHLA…RAPV). The segment at 666-783 (PGGSEDQRLN…EVPLFGRAAR (118 aa)) is flexible hinge. 3 coiled-coil regions span residues 835-923 (EAEI…AKLE), 977-1115 (EMLS…TAKA), and 1209-1266 (VEAI…QNVS).

It belongs to the SMC family. MukB subfamily. Homodimerization via its hinge domain. Binds to DNA via its C-terminal region. Interacts, and probably forms a ternary complex, with MukE and MukF via its C-terminal region. The complex formation is stimulated by calcium or magnesium. Interacts with tubulin-related protein FtsZ.

It localises to the cytoplasm. The protein resides in the nucleoid. Plays a central role in chromosome condensation, segregation and cell cycle progression. Functions as a homodimer, which is essential for chromosome partition. Involved in negative DNA supercoiling in vivo, and by this means organize and compact chromosomes. May achieve or facilitate chromosome segregation by condensation DNA from both sides of a centrally located replisome during cell division. This is Chromosome partition protein MukB from Shigella boydii serotype 4 (strain Sb227).